The sequence spans 198 residues: Mediator of RNA polymerase II transcription subunit 20 (198 aa).

The protein belongs to the Mediator complex subunit 20 family. As to quaternary structure, component of the Mediator complex.

It localises to the nucleus. In terms of biological role, component of the Mediator complex, a coactivator involved in the regulated transcription of nearly all RNA polymerase II-dependent genes. Mediator functions as a bridge to convey information from gene-specific regulatory proteins to the basal RNA polymerase II transcription machinery. Mediator is recruited to promoters by direct interactions with regulatory proteins and serves as a scaffold for the assembly of a functional preinitiation complex with RNA polymerase II and the general transcription factors. This chain is Mediator of RNA polymerase II transcription subunit 20 (mdt-20), found in Caenorhabditis briggsae.